The primary structure comprises 209 residues: MKPFRLYAITGEEFHPGRDVVEVMEEAIQGGVDIIQLRDKTSSKKAVLEKARRLKKLAADYGIPFIVNDHIDVALAVDASGVHVGQDDLPLPEVRKLLGPDKIIGVSTHKLEEALEAEKNGADYIGVGPIFPTNSKADVVDPVTTAYIREVKEHVTIPFVAIGGIKRHNVREVIEAGAEAICVITEIVAARDVKAASQALLAAMEEASQ.

Residues 36–40 and Asn-68 each bind 4-amino-2-methyl-5-(diphosphooxymethyl)pyrimidine; that span reads QLRDK. Mg(2+) is bound by residues Asp-69 and Asp-88. Ser-107 is a binding site for 4-amino-2-methyl-5-(diphosphooxymethyl)pyrimidine. 133 to 135 serves as a coordination point for 2-[(2R,5Z)-2-carboxy-4-methylthiazol-5(2H)-ylidene]ethyl phosphate; the sequence is TNS. A 4-amino-2-methyl-5-(diphosphooxymethyl)pyrimidine-binding site is contributed by Lys-136. Residues Gly-164 and 184–185 contribute to the 2-[(2R,5Z)-2-carboxy-4-methylthiazol-5(2H)-ylidene]ethyl phosphate site; that span reads IT.

This sequence belongs to the thiamine-phosphate synthase family. It depends on Mg(2+) as a cofactor.

The enzyme catalyses 2-[(2R,5Z)-2-carboxy-4-methylthiazol-5(2H)-ylidene]ethyl phosphate + 4-amino-2-methyl-5-(diphosphooxymethyl)pyrimidine + 2 H(+) = thiamine phosphate + CO2 + diphosphate. The catalysed reaction is 2-(2-carboxy-4-methylthiazol-5-yl)ethyl phosphate + 4-amino-2-methyl-5-(diphosphooxymethyl)pyrimidine + 2 H(+) = thiamine phosphate + CO2 + diphosphate. It carries out the reaction 4-methyl-5-(2-phosphooxyethyl)-thiazole + 4-amino-2-methyl-5-(diphosphooxymethyl)pyrimidine + H(+) = thiamine phosphate + diphosphate. Its pathway is cofactor biosynthesis; thiamine diphosphate biosynthesis; thiamine phosphate from 4-amino-2-methyl-5-diphosphomethylpyrimidine and 4-methyl-5-(2-phosphoethyl)-thiazole: step 1/1. Condenses 4-methyl-5-(beta-hydroxyethyl)thiazole monophosphate (THZ-P) and 2-methyl-4-amino-5-hydroxymethyl pyrimidine pyrophosphate (HMP-PP) to form thiamine monophosphate (TMP). The protein is Thiamine-phosphate synthase of Shouchella clausii (strain KSM-K16) (Alkalihalobacillus clausii).